The primary structure comprises 72 residues: Translation initiation factor IF-1 (72 aa).

The S1-like domain occupies 1–72; sequence MAKKDVIELE…TRGRITWRKK (72 aa).

Belongs to the IF-1 family. Component of the 30S ribosomal translation pre-initiation complex which assembles on the 30S ribosome in the order IF-2 and IF-3, IF-1 and N-formylmethionyl-tRNA(fMet); mRNA recruitment can occur at any time during PIC assembly.

The protein localises to the cytoplasm. Its function is as follows. One of the essential components for the initiation of protein synthesis. Stabilizes the binding of IF-2 and IF-3 on the 30S subunit to which N-formylmethionyl-tRNA(fMet) subsequently binds. Helps modulate mRNA selection, yielding the 30S pre-initiation complex (PIC). Upon addition of the 50S ribosomal subunit IF-1, IF-2 and IF-3 are released leaving the mature 70S translation initiation complex. This Clostridioides difficile (strain 630) (Peptoclostridium difficile) protein is Translation initiation factor IF-1.